The sequence spans 1791 residues: MDDRCYPVIFPDERNFRPFTSDSLAAIEKRIAIQKEKKKSKDQTGEVPQPRPQLDLKASRKLPKLYGDIPRELIGKPLEDLDPFYRNHKTFMVLNRKRTIYRFSAKHALFIFGPFNSIRSLAIRVSVHSLFSMFIIGTVIINCVFMATGPAKNSNSNNTDIAECVFTGIYIFEALIKILARGFILDEFSFLRDPWNWLDSIVIGIAIVSYIPGITIKLLPLRTFRVFRALKAISVVSRLKVIVGALLRSVKKLVNVIILTFFCLSIFALVGQQLFMGSLNLKCISRDCKNISNPEAYDHCFEKKENSPEFKMCGIWMGNSACSIQYECKHTKINPDYNYTNFDNFGWSFLAMFRLMTQDSWEKLYQQTLRTTGLYSVFFFIVVIFLGSFYLINLTLAVVTMAYEEQNKNVAAEIEAKEKMFQEAQQLLKEEKEALVAMGIDRSSLTSLETSYFTPKKRKLFGNKKRKSFFLRESGKDQPPGSDSDEDCQKKPQLLEQTKRLSQNLSLDHFDEHGDPLQRQRALSAVSILTITMKEQEKSQEPCLPCGENLASKYLVWNCCPQWLCVKKVLRTVMTDPFTELAITICIIINTVFLAMEHHKMEASFEKMLNIGNLVFTSIFIAEMCLKIIALDPYHYFRRGWNIFDSIVALLSFADVMNCVLQKRSWPFLRSFRVLRVFKLAKSWPTLNTLIKIIGNSVGALGSLTVVLVIVIFIFSVVGMQLFGRSFNSQKSPKLCNPTGPTVSCLRHWHMGDFWHSFLVVFRILCGEWIENMWECMQEANASSSLCVIVFILITVIGKLVVLNLFIALLLNSFSNEERNGNLEGEARKTKVQLALDRFRRAFCFVRHTLEHFCHKWCRKQNLPQQKEVAGGCAAQSKDIIPLVMEMKRGSETQEELGILTSVPKTLGVRHDWTWLAPLAEEEDDVEFSGEDNAQRITQPEPEQQAYELHQENKKPTSQRVQSVEIDMFSEDEPHLTIQDPRKKSDVTSILSECSTIDLQDGFGWLPEMVPKKQPERCLPKGFGCCFPCCSVDKRKPPWVIWWNLRKTCYQIVKHSWFESFIIFVILLSSGALIFEDVHLENQPKIQELLNCTDIIFTHIFILEMVLKWVAFGFGKYFTSAWCCLDFIIVIVSVTTLINLMELKSFRTLRALRPLRALSQFEGMKVVVNALIGAIPAILNVLLVCLIFWLVFCILGVYFFSGKFGKCINGTDSVINYTIITNKSQCESGNFSWINQKVNFDNVGNAYLALLQVATFKGWMDIIYAAVDSTEKEQQPEFESNSLGYIYFVVFIIFGSFFTLNLFIGVIIDNFNQQQKKLGGQDIFMTEEQKKYYNAMKKLGSKKPQKPIPRPLNKCQGLVFDIVTSQIFDIIIISLIILNMISMMAESYNQPKAMKSILDHLNWVFVVIFTLECLIKIFALRQYYFTNGWNLFDCVVVLLSIVSTMISTLENQEHIPFPPTLFRIVRLARIGRILRLVRAARGIRTLLFALMMSLPSLFNIGLLLFLIMFIYAILGMNWFSKVNPESGIDDIFNFKTFASSMLCLFQISTSAGWDSLLSPMLRSKESCNSSSENCHLPGIATSYFVSYIIISFLIVVNMYIAVILENFNTATEESEDPLGEDDFDIFYEVWEKFDPEATQFIKYSALSDFADALPEPLRVAKPNKYQFLVMDLPMVSEDRLHCMDILFAFTARVLGGSDGLDSMKAMMEEKFMEANPLKKLYEPIVTTTKRKEEERGAAIIQKAFRKYMMKVTKGDQGDQNDLENGPHSPLQTLCNGDLSSFGVAKGKVHCD.

The Cytoplasmic portion of the chain corresponds to 1–126; it reads MDDRCYPVIF…SIRSLAIRVS (126 aa). One copy of the I repeat lies at 115-408; it reads FNSIRSLAIR…VTMAYEEQNK (294 aa). The chain crosses the membrane as a helical span at residues 127–148; it reads VHSLFSMFIIGTVIINCVFMAT. The Extracellular segment spans residues 149 to 156; the sequence is GPAKNSNS. The helical transmembrane segment at 157-180 threads the bilayer; that stretch reads NNTDIAECVFTGIYIFEALIKILA. Residues 181–192 are Cytoplasmic-facing; it reads RGFILDEFSFLR. Residues 193–212 form a helical membrane-spanning segment; sequence DPWNWLDSIVIGIAIVSYIP. The Extracellular portion of the chain corresponds to 213 to 219; that stretch reads GITIKLL. A helical; Voltage-sensor transmembrane segment spans residues 220-239; that stretch reads PLRTFRVFRALKAISVVSRL. Residues 240–255 are Cytoplasmic-facing; it reads KVIVGALLRSVKKLVN. Residues 256–269 form a helical membrane-spanning segment; the sequence is VIILTFFCLSIFAL. Topologically, residues 270–344 are extracellular; that stretch reads VGQQLFMGSL…PDYNYTNFDN (75 aa). A disulfide bridge links C283 with C322. N290 and N338 each carry an N-linked (GlcNAc...) asparagine glycan. An intramembrane region (pore-forming) is located at residues 345 to 369; it reads FGWSFLAMFRLMTQDSWEKLYQQTL. At 370–376 the chain is on the extracellular side; that stretch reads RTTGLYS. A helical membrane pass occupies residues 377–402; it reads VFFFIVVIFLGSFYLINLTLAVVTMA. Topologically, residues 403 to 572 are cytoplasmic; that stretch reads YEEQNKNVAA…WLCVKKVLRT (170 aa). One copy of the II repeat lies at 559-833; the sequence is CCPQWLCVKK…EGEARKTKVQ (275 aa). Residues 573–596 traverse the membrane as a helical segment; that stretch reads VMTDPFTELAITICIIINTVFLAM. Residues 597–607 are Extracellular-facing; the sequence is EHHKMEASFEK. The chain crosses the membrane as a helical span at residues 608–631; sequence MLNIGNLVFTSIFIAEMCLKIIAL. Residues 632–639 are Cytoplasmic-facing; that stretch reads DPYHYFRR. Residues 640-659 form a helical membrane-spanning segment; it reads GWNIFDSIVALLSFADVMNC. Over 660–667 the chain is Extracellular; that stretch reads VLQKRSWP. Residues 668–687 form a helical; Voltage-sensor membrane-spanning segment; the sequence is FLRSFRVLRVFKLAKSWPTL. At 688 to 702 the chain is on the cytoplasmic side; sequence NTLIKIIGNSVGALG. The chain crosses the membrane as a helical span at residues 703-725; it reads SLTVVLVIVIFIFSVVGMQLFGR. Topologically, residues 726-753 are extracellular; it reads SFNSQKSPKLCNPTGPTVSCLRHWHMGD. An intramembrane region (pore-forming) is located at residues 754-774; the sequence is FWHSFLVVFRILCGEWIENMW. The Extracellular portion of the chain corresponds to 775–785; that stretch reads ECMQEANASSS. C776 and C787 are disulfide-bonded. N-linked (GlcNAc...) asparagine glycosylation occurs at N781. Residues 786–811 form a helical membrane-spanning segment; that stretch reads LCVIVFILITVIGKLVVLNLFIALLL. Over 812–1051 the chain is Cytoplasmic; it reads NSFSNEERNG…WWNLRKTCYQ (240 aa). The III repeat unit spans residues 1044–1339; it reads NLRKTCYQIV…KKYYNAMKKL (296 aa). The helical transmembrane segment at 1052 to 1074 threads the bilayer; sequence IVKHSWFESFIIFVILLSSGALI. The Extracellular portion of the chain corresponds to 1075–1088; it reads FEDVHLENQPKIQE. Residues 1089–1114 form a helical membrane-spanning segment; the sequence is LLNCTDIIFTHIFILEMVLKWVAFGF. The Cytoplasmic portion of the chain corresponds to 1115-1120; that stretch reads GKYFTS. A helical membrane pass occupies residues 1121-1138; it reads AWCCLDFIIVIVSVTTLI. A topological domain (extracellular) is located at residue N1139. Residues 1140–1161 form a helical; Voltage-sensor membrane-spanning segment; that stretch reads LMELKSFRTLRALRPLRALSQF. Over 1162–1180 the chain is Cytoplasmic; that stretch reads EGMKVVVNALIGAIPAILN. Residues 1181 to 1202 form a helical membrane-spanning segment; the sequence is VLLVCLIFWLVFCILGVYFFSG. The Extracellular segment spans residues 1203 to 1243; sequence KFGKCINGTDSVINYTIITNKSQCESGNFSWINQKVNFDNV. N-linked (GlcNAc...) asparagine glycans are attached at residues N1209, N1216, N1222, and N1230. Positions 1244–1265 form an intramembrane region, pore-forming; it reads GNAYLALLQVATFKGWMDIIYA. The Extracellular segment spans residues 1266-1281; that stretch reads AVDSTEKEQQPEFESN. Residues 1282-1308 form a helical membrane-spanning segment; that stretch reads SLGYIYFVVFIIFGSFFTLNLFIGVII. Topologically, residues 1309–1361 are cytoplasmic; the sequence is DNFNQQQKKLGGQDIFMTEEQKKYYNAMKKLGSKKPQKPIPRPLNKCQGLVFD. The stretch at 1348–1639 is one IV repeat; that stretch reads IPRPLNKCQG…WEKFDPEATQ (292 aa). A helical transmembrane segment spans residues 1362-1385; it reads IVTSQIFDIIIISLIILNMISMMA. The Extracellular portion of the chain corresponds to 1386–1396; it reads ESYNQPKAMKS. A helical membrane pass occupies residues 1397 to 1420; it reads ILDHLNWVFVVIFTLECLIKIFAL. Over 1421–1426 the chain is Cytoplasmic; that stretch reads RQYYFT. A helical membrane pass occupies residues 1427 to 1450; sequence NGWNLFDCVVVLLSIVSTMISTLE. The Extracellular segment spans residues 1451–1461; it reads NQEHIPFPPTL. Residues 1462–1484 form a helical; Voltage-sensor membrane-spanning segment; sequence FRIVRLARIGRILRLVRAARGIR. The Cytoplasmic portion of the chain corresponds to 1485–1499; sequence TLLFALMMSLPSLFN. The helical transmembrane segment at 1500-1522 threads the bilayer; sequence IGLLLFLIMFIYAILGMNWFSKV. The Extracellular segment spans residues 1523-1536; the sequence is NPESGIDDIFNFKT. Positions 1537–1559 form an intramembrane region, pore-forming; that stretch reads FASSMLCLFQISTSAGWDSLLSP. Over 1560-1579 the chain is Extracellular; sequence MLRSKESCNSSSENCHLPGI. The N-linked (GlcNAc...) asparagine glycan is linked to N1568. A helical transmembrane segment spans residues 1580–1604; that stretch reads ATSYFVSYIIISFLIVVNMYIAVIL. The Cytoplasmic portion of the chain corresponds to 1605 to 1791; sequence ENFNTATEES…GVAKGKVHCD (187 aa).

The protein belongs to the sodium channel (TC 1.A.1.10) family. Nav1.9/SCN11A subfamily. The voltage-resistant sodium channel consists of an ion conducting pore forming alpha-subunit regulated by one or more auxiliary subunits SCN1B, SCN2B and SCN3B. Expressed in the dorsal root ganglia and trigeminal ganglia, olfactory bulb, hippocampus, cerebellar cortex, spinal cord, spleen, small intestine and placenta.

It localises to the cell membrane. The enzyme catalyses Na(+)(in) = Na(+)(out). With respect to regulation, activity is not sensitive to inhibition by tetrodotoxin. Its function is as follows. Sodium channel mediating the voltage-dependent sodium ion permeability of excitable membranes. Assuming opened or closed conformations in response to the voltage difference across the membrane, the protein forms a sodium-selective channel through which sodium ions may pass in accordance with their electrochemical gradient. Involved in membrane depolarization during action potential in nociceptors which function as key relay stations for the electrical transmission of pain signals from the periphery to the central nervous system. Also involved in rapid BDNF-evoked neuronal depolarization. In Homo sapiens (Human), this protein is Sodium channel protein type 11 subunit alpha.